A 100-amino-acid polypeptide reads, in one-letter code: ESAT-6-like protein EsxB (100 aa).

The protein belongs to the WXG100 family. CFP-10 subfamily. Forms a tight 1:1 complex with EsxA.

It localises to the secreted. Functionally, a secreted protein that might play a role in virulence. Might serve as a chaperone to prevent uncontrolled membrane lysis by its partner EsxA. This is ESAT-6-like protein EsxB (esxB) from Mycobacterium leprae (strain TN).